Here is a 354-residue protein sequence, read N- to C-terminus: MTTAILQRLSTLSVSGQHLRRLPKILEDGLPKMPGTVPETDVPQLFREPYIRAGYRPIGHEWRYYFFSLFQKHNEVVNVWTHLLAALAVLLRFWAFVETEGLPWTSAHTLPLLLYVLSSITYLTFSLLAHLLQSKSELSHYTFYFVDYVGVSVYQYGSALVHFFYASDQAWYERFWLFFLPAAAFCGWLSCTGCCYAKYRYRRPYPVMRKVCQVVPAGLAFILDISPVAHRVALCHLSGCQEQAAWYHTLQIVFFLVSAYFFSCPVPEKYFPGSCDIVGHGHQIFHAFLSICTLSQLEAILLDYKGRQEIFLHRHSPLSIYAACLSFFFLVACSGATAALLREKIKARLSKKDS.

Over 1-75 (MTTAILQRLS…FFSLFQKHNE (75 aa)) the chain is Cytoplasmic. The chain crosses the membrane as a helical span at residues 76–96 (VVNVWTHLLAALAVLLRFWAF). Residues 97-111 (VETEGLPWTSAHTLP) are Extracellular-facing. A helical transmembrane segment spans residues 112–132 (LLLYVLSSITYLTFSLLAHLL). Residues 133–174 (QSKSELSHYTFYFVDYVGVSVYQYGSALVHFFYASDQAWYER) are Cytoplasmic-facing. Residues 175-195 (FWLFFLPAAAFCGWLSCTGCC) traverse the membrane as a helical segment. Residues 196–213 (YAKYRYRRPYPVMRKVCQ) lie on the Extracellular side of the membrane. The chain crosses the membrane as a helical span at residues 214 to 234 (VVPAGLAFILDISPVAHRVAL). Over 235–243 (CHLSGCQEQ) the chain is Cytoplasmic. A helical transmembrane segment spans residues 244–264 (AAWYHTLQIVFFLVSAYFFSC). Residues 265-283 (PVPEKYFPGSCDIVGHGHQ) are Extracellular-facing. Residues 284–304 (IFHAFLSICTLSQLEAILLDY) form a helical membrane-spanning segment. At 305–319 (KGRQEIFLHRHSPLS) the chain is on the cytoplasmic side. A helical transmembrane segment spans residues 320 to 340 (IYAACLSFFFLVACSGATAAL). The Extracellular segment spans residues 341–354 (LREKIKARLSKKDS).

This sequence belongs to the ADIPOR family.

It is found in the cell membrane. Steroid membrane receptor. Binds progesterone. May be involved in oocyte maturation. This Sus scrofa (Pig) protein is Membrane progestin receptor beta (PAQR8).